A 536-amino-acid polypeptide reads, in one-letter code: Phosphoenolpyruvate carboxykinase (ATP) (536 aa).

The substrate site is built by arginine 61, tyrosine 195, and lysine 201. ATP is bound by residues lysine 201, histidine 220, and 236 to 244; that span reads GLSGTGKTT. Mn(2+) contacts are provided by lysine 201 and histidine 220. Aspartate 257 serves as a coordination point for Mn(2+). 3 residues coordinate ATP: glutamate 285, arginine 322, and threonine 447. Residue arginine 322 coordinates substrate.

This sequence belongs to the phosphoenolpyruvate carboxykinase (ATP) family. Mn(2+) serves as cofactor.

It localises to the cytoplasm. The enzyme catalyses oxaloacetate + ATP = phosphoenolpyruvate + ADP + CO2. The protein operates within carbohydrate biosynthesis; gluconeogenesis. In terms of biological role, involved in the gluconeogenesis. Catalyzes the conversion of oxaloacetate (OAA) to phosphoenolpyruvate (PEP) through direct phosphoryl transfer between the nucleoside triphosphate and OAA. The sequence is that of Phosphoenolpyruvate carboxykinase (ATP) from Brucella anthropi (strain ATCC 49188 / DSM 6882 / CCUG 24695 / JCM 21032 / LMG 3331 / NBRC 15819 / NCTC 12168 / Alc 37) (Ochrobactrum anthropi).